The following is a 260-amino-acid chain: Carbonic anhydrase 2 (260 aa).

In terms of domain architecture, Alpha-carbonic anhydrase spans 3 to 259 (HHWGYDSHNG…LKSREVRASF (257 aa)). Catalysis depends on H64, which acts as the Proton donor/acceptor. Residues H94, H96, and H119 each contribute to the Zn(2+) site. Residue 198-199 (TT) participates in substrate binding.

Belongs to the alpha-carbonic anhydrase family. It depends on Zn(2+) as a cofactor.

It localises to the cytoplasm. The protein localises to the cell membrane. It carries out the reaction hydrogencarbonate + H(+) = CO2 + H2O. It catalyses the reaction urea = cyanamide + H2O. Inhibited by acetazolamide. Catalyzes the reversible hydration of carbon dioxide. Can also hydrate cyanamide to urea. The protein is Carbonic anhydrase 2 (CA2) of Gallus gallus (Chicken).